The sequence spans 390 residues: Succinate--CoA ligase [ADP-forming] subunit beta (390 aa).

Positions 9-245 (KHLLKKYNIP…TTQEDEHETM (237 aa)) constitute an ATP-grasp domain. ATP is bound by residues Lys-46, 53–55 (GRG), Glu-99, Ser-102, and Glu-107. Positions 200 and 214 each coordinate Mg(2+). Residues Asn-265 and 322 to 324 (GIV) contribute to the substrate site.

Belongs to the succinate/malate CoA ligase beta subunit family. As to quaternary structure, heterotetramer of two alpha and two beta subunits. Mg(2+) serves as cofactor.

The catalysed reaction is succinate + ATP + CoA = succinyl-CoA + ADP + phosphate. The enzyme catalyses GTP + succinate + CoA = succinyl-CoA + GDP + phosphate. It participates in carbohydrate metabolism; tricarboxylic acid cycle; succinate from succinyl-CoA (ligase route): step 1/1. Succinyl-CoA synthetase functions in the citric acid cycle (TCA), coupling the hydrolysis of succinyl-CoA to the synthesis of either ATP or GTP and thus represents the only step of substrate-level phosphorylation in the TCA. The beta subunit provides nucleotide specificity of the enzyme and binds the substrate succinate, while the binding sites for coenzyme A and phosphate are found in the alpha subunit. The chain is Succinate--CoA ligase [ADP-forming] subunit beta from Coxiella burnetii (strain RSA 331 / Henzerling II).